A 198-amino-acid chain; its full sequence is Recombination protein RecR (198 aa).

The C4-type zinc-finger motif lies at 56–71 (CTECRDFSETKICAIC). One can recognise a Toprim domain in the interval 79–174 (HQLCVVESPP…RPSRLAQGLP (96 aa)).

This sequence belongs to the RecR family.

Its function is as follows. May play a role in DNA repair. It seems to be involved in an RecBC-independent recombinational process of DNA repair. It may act with RecF and RecO. In Xylella fastidiosa (strain 9a5c), this protein is Recombination protein RecR.